The chain runs to 363 residues: Ribosomal RNA large subunit methyltransferase M (363 aa).

Residues serine 194, 227 to 230 (CPGG), aspartate 246, aspartate 266, and aspartate 284 contribute to the S-adenosyl-L-methionine site. Lysine 313 functions as the Proton acceptor in the catalytic mechanism.

The protein belongs to the class I-like SAM-binding methyltransferase superfamily. RNA methyltransferase RlmE family. RlmM subfamily. In terms of assembly, monomer.

It is found in the cytoplasm. It catalyses the reaction cytidine(2498) in 23S rRNA + S-adenosyl-L-methionine = 2'-O-methylcytidine(2498) in 23S rRNA + S-adenosyl-L-homocysteine + H(+). Its function is as follows. Catalyzes the 2'-O-methylation at nucleotide C2498 in 23S rRNA. This chain is Ribosomal RNA large subunit methyltransferase M, found in Haemophilus influenzae (strain 86-028NP).